The sequence spans 433 residues: Histidinol dehydrogenase (433 aa).

The NAD(+) site is built by Tyr129, Gln191, and Asn214. Substrate-binding residues include Ser237, Gln259, and His262. Residues Gln259 and His262 each contribute to the Zn(2+) site. Active-site proton acceptor residues include Glu326 and His327. Substrate-binding residues include His327, Asp360, Glu414, and His419. A Zn(2+)-binding site is contributed by Asp360. His419 is a Zn(2+) binding site.

This sequence belongs to the histidinol dehydrogenase family. The cofactor is Zn(2+).

The enzyme catalyses L-histidinol + 2 NAD(+) + H2O = L-histidine + 2 NADH + 3 H(+). It participates in amino-acid biosynthesis; L-histidine biosynthesis; L-histidine from 5-phospho-alpha-D-ribose 1-diphosphate: step 9/9. Functionally, catalyzes the sequential NAD-dependent oxidations of L-histidinol to L-histidinaldehyde and then to L-histidine. This chain is Histidinol dehydrogenase, found in Methanosarcina mazei (strain ATCC BAA-159 / DSM 3647 / Goe1 / Go1 / JCM 11833 / OCM 88) (Methanosarcina frisia).